The primary structure comprises 2069 residues: Dedicator of cytokinesis protein 9 (2069 aa).

4 positions are modified to phosphoserine: Ser21, Ser32, Ser167, and Ser170. Residues 174-281 (GITKHGWLYK…WITILNKILQ (108 aa)) form the PH domain. Residues 290 to 313 (EKRNGDSHEDDEQSKLEGSGSGLD) form a disordered region. 2 positions are modified to phosphoserine: Ser433 and Ser443. Residues 640–818 (TNHLYVYPKY…PLLKISTHLV (179 aa)) form the C2 DOCK-type domain. Phosphoserine occurs at positions 927 and 1235. Phosphothreonine is present on Thr1241. Residues 1241 to 1282 (TPNINSVRNADSRGSLISTDSGNSLPERNSEKSNSLDKHQQS) are disordered. Ser1255, Ser1261, and Ser1264 each carry phosphoserine. The segment covering 1255–1267 (SLISTDSGNSLPE) has biased composition (polar residues). Over residues 1268 to 1280 (RNSEKSNSLDKHQ) the composition is skewed to basic and acidic residues. In terms of domain architecture, DOCKER spans 1605 to 2069 (KSYASTPELR…LSEIMHEQLG (465 aa)). An interaction with CDC42 region spans residues 1693–2069 (DEEASMMEDV…LSEIMHEQLG (377 aa)). Coiled-coil stretches lie at residues 1948–1982 (IEVAIDEMSKKVAELRQLCSSAEVDMIKLQLKLQG) and 2034–2067 (NERLIKEDQLEYQEEMKANYREMAKELSEIMHEQ).

The protein belongs to the DOCK family. Homodimer. Interacts preferentially with nucleotide-depleted CDC42. In terms of tissue distribution, widely expressed, with highest expression in heart and placenta. Expressed at intermediate level in kidney, brain, lung and skeletal muscle.

It is found in the endomembrane system. In terms of biological role, guanine nucleotide-exchange factor (GEF) that activates CDC42 by exchanging bound GDP for free GTP. Overexpression induces filopodia formation. This Homo sapiens (Human) protein is Dedicator of cytokinesis protein 9.